The sequence spans 243 residues: MTDLRPGLTAIVPAAGIGSRMGAECPKQYLQLAGRTILEHTLTRLLSHPAIAQVIVALAPHDRWFDTLAVAADPRILRVEGGAERAFSVLNALHVAAGEWVLVHDAARPCLTHGDLDALIATAMACDGAILGSRVRDTMKRSDGAGNILATVDREQLWHALTPQMFPTRPLRRALEEGLALGATITDEASAMERAGFTVRMVEGRADNIKVTRPEDLSLAGLYLQQQNARQPAQPDSPTEELA.

It belongs to the IspD/TarI cytidylyltransferase family. IspD subfamily.

The catalysed reaction is 2-C-methyl-D-erythritol 4-phosphate + CTP + H(+) = 4-CDP-2-C-methyl-D-erythritol + diphosphate. It participates in isoprenoid biosynthesis; isopentenyl diphosphate biosynthesis via DXP pathway; isopentenyl diphosphate from 1-deoxy-D-xylulose 5-phosphate: step 2/6. In terms of biological role, catalyzes the formation of 4-diphosphocytidyl-2-C-methyl-D-erythritol from CTP and 2-C-methyl-D-erythritol 4-phosphate (MEP). In Aeromonas hydrophila subsp. hydrophila (strain ATCC 7966 / DSM 30187 / BCRC 13018 / CCUG 14551 / JCM 1027 / KCTC 2358 / NCIMB 9240 / NCTC 8049), this protein is 2-C-methyl-D-erythritol 4-phosphate cytidylyltransferase.